A 430-amino-acid chain; its full sequence is Na(+)/H(+) antiporter NhaA 2 (430 aa).

10 consecutive transmembrane segments (helical) span residues 11-31 (FVHG…IAFI), 60-80 (LSLE…LVGL), 97-117 (VALA…LYTA), 127-147 (GWGV…ALLG), 181-201 (LNLT…YAGW), 215-235 (VLLW…GVLL), 288-308 (HALH…TNAG), 309-329 (VPVA…GLLL), 356-376 (WGHM…SLFV), and 393-413 (GVLL…LLGI).

The protein belongs to the NhaA Na(+)/H(+) (TC 2.A.33) antiporter family.

The protein resides in the cell membrane. The enzyme catalyses Na(+)(in) + 2 H(+)(out) = Na(+)(out) + 2 H(+)(in). In terms of biological role, na(+)/H(+) antiporter that extrudes sodium in exchange for external protons. This is Na(+)/H(+) antiporter NhaA 2 from Deinococcus geothermalis (strain DSM 11300 / CIP 105573 / AG-3a).